The following is a 220-amino-acid chain: Guanylate kinase (220 aa).

One can recognise a Guanylate kinase-like domain in the interval 15–194 (GLMLVISSPS…ALDAVQSIVK (180 aa)). Residue 22–29 (SPSGAGKS) coordinates ATP.

This sequence belongs to the guanylate kinase family.

It is found in the cytoplasm. The catalysed reaction is GMP + ATP = GDP + ADP. Functionally, essential for recycling GMP and indirectly, cGMP. The sequence is that of Guanylate kinase from Rhizobium johnstonii (strain DSM 114642 / LMG 32736 / 3841) (Rhizobium leguminosarum bv. viciae).